The primary structure comprises 584 residues: Lamin-B1 (584 aa).

Residues 1-22 form a disordered region; that stretch reads MAAAVAPLSPQPRGAAASAALS. Residues 2-33 form a head region; the sequence is AAAVAPLSPQPRGAAASAALSPTRISRLQEKE. A Phosphoserine modification is found at Ser-22. Residues 31-387 form the IF rod domain; it reads EKEELRQLND…KLLESEEERL (357 aa). The tract at residues 34 to 70 is coil 1A; sequence ELRQLNDRLAVYIDKVRSLETENSALQRRVSEREQVC. The segment at 81–218 is coil 1B; sequence FETELADARK…NVYEEEIKET (138 aa). The coil 2 stretch occupies residues 243-385; it reads QALKEIREQH…YRKLLESEEE (143 aa). The tract at residues 386–584 is tail; the sequence is RLRLSPGPSS…RKPERSCVVM (199 aa). Disordered stretches follow at residues 388-431 and 548-584; these read RLSP…SVSI and TVNEGEEEEEEGEEEILEDVIHQQGSPRKPERSCVVM. Positions 394 to 408 are enriched in low complexity; it reads SSRVTVSRASSSRSV. The Nuclear localization signal signature appears at 414–419; that stretch reads KRKRID. The region spanning 429–545 is the LTD domain; that stretch reads VSISHSASAT…EEVAQRSTVF (117 aa). Positions 551 to 565 are enriched in acidic residues; the sequence is EGEEEEEEGEEEILE. Residues 575-584 are compositionally biased toward basic and acidic residues; the sequence is RKPERSCVVM. Residue Cys-581 is modified to Cysteine methyl ester. A lipid anchor (S-farnesyl cysteine) is attached at Cys-581. Positions 582–584 are cleaved as a propeptide — removed in mature form; sequence VVM.

The protein belongs to the intermediate filament family. In terms of assembly, homodimer. Lamin dimers then assemble into dimeric head-to-tail polymers. Ultimately, two head-to-tail polymers assemble laterally into a protofilament with a uniformly shaped rod of 3.5 nm in diameter. In terms of processing, phosphorylation plays a key role in lamin organization, subcellular localization and nuclear envelope disintegration. Phosphorylation by CDK1 at Ser-22 at the onset of mitosis drives lamin disassembly and nuclear envelope breakdown.

Its subcellular location is the nucleus lamina. It is found in the nucleus envelope. The protein resides in the nucleus. It localises to the nucleoplasm. The protein localises to the nucleus matrix. Its function is as follows. Lamins are intermediate filament proteins that assemble into a filamentous meshwork, and which constitute the major components of the nuclear lamina, a fibrous layer on the nucleoplasmic side of the inner nuclear membrane. Lamins provide a framework for the nuclear envelope, bridging the nuclear envelope and chromatin. Plays an important role in nuclear assembly, chromatin organization, nuclear membrane and telomere dynamics. This Gallus gallus (Chicken) protein is Lamin-B1 (LMNB1).